A 103-amino-acid polypeptide reads, in one-letter code: Co-chaperonin GroES (103 aa).

Residues 31-67 (GGILLPDTAKEKPQVGEVAQVGPGKRNEDGSRQSPEV) form a disordered region.

Belongs to the GroES chaperonin family. Heptamer of 7 subunits arranged in a ring. Interacts with the chaperonin GroEL.

The protein resides in the cytoplasm. In terms of biological role, together with the chaperonin GroEL, plays an essential role in assisting protein folding. The GroEL-GroES system forms a nano-cage that allows encapsulation of the non-native substrate proteins and provides a physical environment optimized to promote and accelerate protein folding. GroES binds to the apical surface of the GroEL ring, thereby capping the opening of the GroEL channel. This Prochlorococcus marinus (strain NATL2A) protein is Co-chaperonin GroES.